A 420-amino-acid polypeptide reads, in one-letter code: Protein translocase subunit SecY (420 aa).

10 helical membrane passes run 9–29, 61–81, 104–124, 141–161, 173–193, 203–223, 257–277, 300–320, 355–375, and 377–397; these read ILITLGFLFLYRVLAYIPIPG, LSIISLGIMPYITSSIIMELL, IVRYLTILITLIQAVSVSVGL, VFMIVSAFSMLTGTMLLMWIG, ISLIIFAGIVSGIPSAISGTF, ILMLIGIVLIVLATIFAIIYV, LSGVIPPIFASALLVFPSTIL, YNILMFLLIIFFAYFYSSIVF, KLTLWGSLYLALISTVPWILV, and AMGVPFYFGGTAVLIVVQVAI.

Belongs to the SecY/SEC61-alpha family. As to quaternary structure, component of the Sec protein translocase complex. Heterotrimer consisting of SecY, SecE and SecG subunits. The heterotrimers can form oligomers, although 1 heterotrimer is thought to be able to translocate proteins. Interacts with the ribosome. Interacts with SecDF, and other proteins may be involved. Interacts with SecA.

The protein localises to the cell inner membrane. In terms of biological role, the central subunit of the protein translocation channel SecYEG. Consists of two halves formed by TMs 1-5 and 6-10. These two domains form a lateral gate at the front which open onto the bilayer between TMs 2 and 7, and are clamped together by SecE at the back. The channel is closed by both a pore ring composed of hydrophobic SecY resides and a short helix (helix 2A) on the extracellular side of the membrane which forms a plug. The plug probably moves laterally to allow the channel to open. The ring and the pore may move independently. In Helicobacter pylori (strain ATCC 700392 / 26695) (Campylobacter pylori), this protein is Protein translocase subunit SecY.